A 479-amino-acid polypeptide reads, in one-letter code: Ribosomal RNA small subunit methyltransferase F (479 aa).

S-adenosyl-L-methionine contacts are provided by residues 125-131 (AAAPGSK), Glu-149, Asp-176, and Asp-194. Catalysis depends on Cys-247, which acts as the Nucleophile.

The protein belongs to the class I-like SAM-binding methyltransferase superfamily. RsmB/NOP family.

It is found in the cytoplasm. The enzyme catalyses cytidine(1407) in 16S rRNA + S-adenosyl-L-methionine = 5-methylcytidine(1407) in 16S rRNA + S-adenosyl-L-homocysteine + H(+). In terms of biological role, specifically methylates the cytosine at position 1407 (m5C1407) of 16S rRNA. The sequence is that of Ribosomal RNA small subunit methyltransferase F from Salmonella agona (strain SL483).